The primary structure comprises 439 residues: GTPase Der (439 aa).

2 EngA-type G domains span residues 3–167 and 176–351; these read PLVA…PKSS and TRIA…AQYS. GTP is bound by residues 9–16, 56–60, 119–122, 182–189, 229–233, and 294–297; these read GRPNVGKS, DTGGF, NKVD, DTAGI, and NKWD. Residues 352-436 enclose the KH-like domain; the sequence is KRVSTSDLNR…PLKIIFRGRD (85 aa).

This sequence belongs to the TRAFAC class TrmE-Era-EngA-EngB-Septin-like GTPase superfamily. EngA (Der) GTPase family. As to quaternary structure, associates with the 50S ribosomal subunit.

Functionally, GTPase that plays an essential role in the late steps of ribosome biogenesis. The sequence is that of GTPase Der from Geobacter metallireducens (strain ATCC 53774 / DSM 7210 / GS-15).